A 213-amino-acid polypeptide reads, in one-letter code: Pyridoxine/pyridoxamine 5'-phosphate oxidase 2 (213 aa).

Residues 9-12 (RQRY) and Lys-67 contribute to the substrate site. FMN contacts are provided by residues 62 to 67 (RTVLLK), 77 to 78 (FT), Lys-84, and Gln-106. Tyr-124, Arg-128, and Ser-132 together coordinate substrate. FMN-binding positions include 141 to 142 (QS) and Trp-186. Substrate is bound at residue 192–194 (RLH). Arg-196 provides a ligand contact to FMN.

This sequence belongs to the pyridoxamine 5'-phosphate oxidase family. As to quaternary structure, homodimer. FMN serves as cofactor.

The catalysed reaction is pyridoxamine 5'-phosphate + O2 + H2O = pyridoxal 5'-phosphate + H2O2 + NH4(+). It carries out the reaction pyridoxine 5'-phosphate + O2 = pyridoxal 5'-phosphate + H2O2. The protein operates within cofactor metabolism; pyridoxal 5'-phosphate salvage; pyridoxal 5'-phosphate from pyridoxamine 5'-phosphate: step 1/1. It participates in cofactor metabolism; pyridoxal 5'-phosphate salvage; pyridoxal 5'-phosphate from pyridoxine 5'-phosphate: step 1/1. In terms of biological role, catalyzes the oxidation of either pyridoxine 5'-phosphate (PNP) or pyridoxamine 5'-phosphate (PMP) into pyridoxal 5'-phosphate (PLP). The sequence is that of Pyridoxine/pyridoxamine 5'-phosphate oxidase 2 from Hydrogenovibrio crunogenus (strain DSM 25203 / XCL-2) (Thiomicrospira crunogena).